The chain runs to 73 residues: Conotoxin Vc6.17 (73 aa).

Positions 1 to 19 are cleaved as a signal peptide; sequence MQKLIILLLVAAVLMSTQA. A propeptide spanning residues 20–44 is cleaved from the precursor; that stretch reads LFQEKRRKEKIDLLSKRKTDAEKQH. 3 disulfide bridges follow: Cys48/Cys62, Cys55/Cys66, and Cys61/Cys71.

It belongs to the conotoxin O2 superfamily. As to expression, expressed by the venom duct.

The protein localises to the secreted. Its function is as follows. Inhibits voltage-gated ion channels. In Conus victoriae (Queen Victoria cone), this protein is Conotoxin Vc6.17.